The sequence spans 491 residues: Probable succinate-semialdehyde dehydrogenase [NADP(+)] (491 aa).

NADP(+)-binding positions include 163 to 164 (WN), 187 to 190 (KPAE), and 241 to 242 (GS). Glu-263 acts as the Proton acceptor in catalysis. Residue Leu-264 participates in NADP(+) binding. Catalysis depends on Cys-297, which acts as the Nucleophile. Glu-394 is an NADP(+) binding site.

Belongs to the aldehyde dehydrogenase family.

The catalysed reaction is succinate semialdehyde + NADP(+) + H2O = succinate + NADPH + 2 H(+). It participates in amino-acid degradation; 4-aminobutanoate degradation. In terms of biological role, catalyzes the NADP(+) dependent oxidation of succinate semialdehyde to succinate. This is Probable succinate-semialdehyde dehydrogenase [NADP(+)] (gabD) from Sinorhizobium fredii (strain NBRC 101917 / NGR234).